The primary structure comprises 374 residues: Ferroptosis suppressor protein 1 (374 aa).

A lipid anchor (N-myristoyl glycine) is attached at G2. Residues 13–35 traverse the membrane as a helical segment; it reads VVIVGGGFAGIAAASQLKSFGIP. 6-hydroxy-FAD-binding positions include 17–21, R53, and V81; that span reads GGGFA. N6-acetyllysine is present on K167. D285 is a 6-hydroxy-FAD binding site.

This sequence belongs to the FAD-dependent oxidoreductase family. Requires 6-hydroxy-FAD as cofactor. In terms of processing, N-myristoylation at Gly-2 mediates the recruitment to lipid droplets and plasma membrane. Post-translationally, acetylation at Lys-167 prevents AIFM2 ubiquitination and degradation, thereby inhibiting ferroptosis. KAT2B mediates acetylation at Lys-167, while HDAC3 removes it. Ubiquitinated. AIFM2 undergoes 'Lys-29'-ubiquitination and proteasomal degradation, which is inhibited by acetylation at Lys-167.

Its subcellular location is the lipid droplet. It localises to the cell membrane. The protein localises to the cytoplasm. The protein resides in the mitochondrion membrane. It is found in the nucleus. It carries out the reaction ubiquinone-10 + NADH + H(+) = ubiquinol-10 + NAD(+). The catalysed reaction is phylloquinone + NADH + H(+) = phylloquinol + NAD(+). The enzyme catalyses menaquinone-4 + NADH + H(+) = menaquinol-4 + NAD(+). It catalyses the reaction menadione + NADH + H(+) = menadiol + NAD(+). Its activity is regulated as follows. The modification by 4-hydroxy-2-nonenal (HNE) adduction in mitochondria results in loss of the oxidoreductase activity and activation of a novel function in mitochondrial oxidative stress signaling. An NAD(P)H-dependent oxidoreductase that acts as a key inhibitor of ferroptosis. At the plasma membrane, catalyzes reduction of coenzyme Q/ubiquinone-10 to ubiquinol-10, a lipophilic radical-trapping antioxidant that prevents lipid oxidative damage and consequently ferroptosis. Acts in parallel to GPX4 to suppress phospholipid peroxidation and ferroptosis. This anti-ferroptotic function is independent of cellular glutathione levels. Also acts as a potent radical-trapping antioxidant by mediating warfarin-resistant vitamin K reduction in the canonical vitamin K cycle: catalyzes NAD(P)H-dependent reduction of vitamin K (phylloquinone, menaquinone-4 and menadione) to hydroquinone forms. Hydroquinones act as potent radical-trapping antioxidants inhibitor of phospholipid peroxidation and ferroptosis. May play a role in mitochondrial stress signaling. Upon oxidative stress, associates with the lipid peroxidation end product 4-hydroxy-2-nonenal (HNE) forming a lipid adduct devoid of oxidoreductase activity, which then translocates from mitochondria into the nucleus triggering DNA damage and cell death. This is Ferroptosis suppressor protein 1 (aifm2) from Xenopus laevis (African clawed frog).